The sequence spans 150 residues: SsrA-binding protein (150 aa).

Belongs to the SmpB family.

Its subcellular location is the cytoplasm. Required for rescue of stalled ribosomes mediated by trans-translation. Binds to transfer-messenger RNA (tmRNA), required for stable association of tmRNA with ribosomes. tmRNA and SmpB together mimic tRNA shape, replacing the anticodon stem-loop with SmpB. tmRNA is encoded by the ssrA gene; the 2 termini fold to resemble tRNA(Ala) and it encodes a 'tag peptide', a short internal open reading frame. During trans-translation Ala-aminoacylated tmRNA acts like a tRNA, entering the A-site of stalled ribosomes, displacing the stalled mRNA. The ribosome then switches to translate the ORF on the tmRNA; the nascent peptide is terminated with the 'tag peptide' encoded by the tmRNA and targeted for degradation. The ribosome is freed to recommence translation, which seems to be the essential function of trans-translation. In Borreliella burgdorferi (strain ATCC 35210 / DSM 4680 / CIP 102532 / B31) (Borrelia burgdorferi), this protein is SsrA-binding protein.